A 137-amino-acid polypeptide reads, in one-letter code: NADH-quinone oxidoreductase subunit A (137 aa).

Transmembrane regions (helical) follow at residues 12 to 32 (WGFAIFLLGVVGLCAFMLGLS), 66 to 86 (FYLVAMLFVIFDIEALFLFAW), and 95 to 115 (WTGFVEALVFIAILLAGLVYL).

Belongs to the complex I subunit 3 family. In terms of assembly, NDH-1 is composed of 13 different subunits. Subunits NuoA, H, J, K, L, M, N constitute the membrane sector of the complex.

The protein resides in the cell inner membrane. It carries out the reaction a quinone + NADH + 5 H(+)(in) = a quinol + NAD(+) + 4 H(+)(out). NDH-1 shuttles electrons from NADH, via FMN and iron-sulfur (Fe-S) centers, to quinones in the respiratory chain. The immediate electron acceptor for the enzyme in this species is believed to be ubiquinone. Couples the redox reaction to proton translocation (for every two electrons transferred, four hydrogen ions are translocated across the cytoplasmic membrane), and thus conserves the redox energy in a proton gradient. The protein is NADH-quinone oxidoreductase subunit A of Pseudomonas savastanoi pv. phaseolicola (strain 1448A / Race 6) (Pseudomonas syringae pv. phaseolicola (strain 1448A / Race 6)).